The following is a 358-amino-acid chain: MNASPFLNESSPTRPTSFVLPDLVSHCKFPLSYHPNGDEIAQESVDWLDSSCPDLTAKQRRALRVLQSGELTAYCYNQATSPERLRVVSDFLTYLFHLDNISDGMMTRETDVLADVVMNAFWFTDKYMPTRGPGKEQLDEELNPGKLARDFWSRAIADCGVGVQARFKETMGLFFEAVNIQARMRDEDTIPDLESYIDVRRDTSGCKPSWVLIEYALGIDLPDHVVDHPIMQALNQGTNDLVTWSNDIFSYNVEQSRGDTHNMIVILMEYHGHTLQSAVDYVGELCAQTIDTFCENKERLPSWGPEIDDMVARYVKGLQDWIVGSLHWSFQTQRYFGKDGLDIKKHRFVKLLPLEAAK.

4 residues coordinate Mg(2+): Asp-99, Asn-246, Ser-250, and Glu-254. Residues 99-103 (DNISD) carry the DDXXD motif motif. (2E,6E)-farnesyl diphosphate-binding residues include Arg-334 and Tyr-335.

Belongs to the terpene synthase family. It depends on Mg(2+) as a cofactor.

It catalyses the reaction (2E,6E)-farnesyl diphosphate = alpha-muurolene + diphosphate. The catalysed reaction is (2E,6E)-farnesyl diphosphate = gamma-muurolene + diphosphate. The enzyme catalyses (2E,6E)-farnesyl diphosphate = delta-cadinene + diphosphate. Terpene cyclase that catalyzes the cyclization of farnesyl diphosphate (FPP) to various sesquiterpenes, including alpha-muurolene, gamma-muurolene, germacrene, delta-cadinene, delta-cadinol and cubenol. This chain is Sesquiterpene synthase Agr3, found in Cyclocybe aegerita (Black poplar mushroom).